The sequence spans 202 residues: Securin (202 aa).

Alanine 2 is subject to N-acetylalanine. The interval 35 to 90 (LDGRSQVSTPRFGKTFDAPPALPKATRKALGTVNRATEKSVKTKGPLKQKQPSFSA) is disordered. Residues 61–64 (RKAL) carry the D-box motif. 2 consecutive short sequence motifs (TEK-box) follow at residues 71 to 73 (TEK) and 94 to 96 (TEK). Residues 163-173 (PPSPVKMPSPP) carry the SH3-binding motif. Serine 165 carries the phosphoserine; by CDK1 modification.

Belongs to the securin family. Interacts with RPS10 and DNAJA1. Interacts with the caspase-like ESPL1, and prevents its protease activity probably by covering its active site. Interacts with TP53 and blocks its activity probably by blocking its binding to DNA. Interacts with the Ku 70 kDa subunit of ds-DNA kinase. Interacts with PTTG1IP. Phosphorylated at Ser-165 by CDK1 during mitosis. Post-translationally, phosphorylated in vitro by ds-DNA kinase. In terms of processing, ubiquitinated through 'Lys-11' linkage of ubiquitin moieties by the anaphase promoting complex (APC) at the onset of anaphase, conducting to its degradation. 'Lys-11'-linked ubiquitination is mediated by the E2 ligase UBE2C/UBCH10. As to expression, expressed at low level in most tissues, except in adult testis, where it is highly expressed. Overexpressed in many patients suffering from pituitary adenomas, primary epithelial neoplasias, and esophageal cancer.

Its subcellular location is the cytoplasm. It is found in the nucleus. In terms of biological role, regulatory protein, which plays a central role in chromosome stability, in the p53/TP53 pathway, and DNA repair. Probably acts by blocking the action of key proteins. During the mitosis, it blocks Separase/ESPL1 function, preventing the proteolysis of the cohesin complex and the subsequent segregation of the chromosomes. At the onset of anaphase, it is ubiquitinated, conducting to its destruction and to the liberation of ESPL1. Its function is however not limited to a blocking activity, since it is required to activate ESPL1. Negatively regulates the transcriptional activity and related apoptosis activity of TP53. The negative regulation of TP53 may explain the strong transforming capability of the protein when it is overexpressed. May also play a role in DNA repair via its interaction with Ku, possibly by connecting DNA damage-response pathways with sister chromatid separation. The sequence is that of Securin (PTTG1) from Homo sapiens (Human).